The primary structure comprises 246 residues: Polyhedrin (246 aa).

This sequence belongs to the polyhedrin family.

Functionally, major component of the virus occlusion bodies, which are large proteinaceous structures (polyhedra), that protect the virus from the outside environment for extended periods until they are ingested by insect larvae. The sequence is that of Polyhedrin (PH) from Heliothis zea nuclear polyhedrosis virus (HzSNPV).